Reading from the N-terminus, the 308-residue chain is MSITGMDSSHVTESQGTLLFNEPLAEYTTWRVGGPAARLYKPANIDDLALFLSRLPFDEPLLWLGLGSNSLIRDGGFSGTVILTQGCLKEMTLLSDNCIRVEAGVSCASMARFSARNNLSGGEFWAGIPGTMGGALRMNAGCHGGETWQSVIEVQTINRRGEIRTRKPEEFEVAYRHVAGLGDEWFISAKLQLSPGNKETSLQLIKDLLAHRAKTQPTNEYNCGSVFRNPPGDFAARLIESCGLKGVSIGGAVVSEKHANFIINHQGTATAANIEALIHLVQTKVREQTSIELIREVHIIGDANVQTR.

One can recognise an FAD-binding PCMH-type domain in the interval 32–196 (VGGPAARLYK…ISAKLQLSPG (165 aa)). The active site involves arginine 176. The active-site Proton donor is the serine 225. Residue glutamate 296 is part of the active site.

It belongs to the MurB family. It depends on FAD as a cofactor.

The protein resides in the cytoplasm. It carries out the reaction UDP-N-acetyl-alpha-D-muramate + NADP(+) = UDP-N-acetyl-3-O-(1-carboxyvinyl)-alpha-D-glucosamine + NADPH + H(+). Its pathway is cell wall biogenesis; peptidoglycan biosynthesis. Functionally, cell wall formation. This chain is UDP-N-acetylenolpyruvoylglucosamine reductase, found in Legionella pneumophila subsp. pneumophila (strain Philadelphia 1 / ATCC 33152 / DSM 7513).